Consider the following 238-residue polypeptide: Mannose-binding protein A (238 aa).

Residues 1–17 (MLLLPLLVLLCVVSVSS) form the signal peptide. Basic and acidic residues predominate over residues 38–49 (DGRDGPKGEKGE). The segment at 38–87 (DGRDGPKGEKGEPGQGLRGLQGPPGKLGPPGSVGAPGSQGPKGQKGDRGD) is disordered. The 50-residue stretch at 39–88 (GRDGPKGEKGEPGQGLRGLQGPPGKLGPPGSVGAPGSQGPKGQKGDRGDS) folds into the Collagen-like domain. Residue Pro43 is modified to 4-hydroxyproline. 2 positions are modified to 5-hydroxylysine: Lys44 and Lys47. O-linked (Gal...) hydroxylysine glycans are attached at residues Lys44 and Lys47. Residues Pro50, Pro61, Pro67, Pro73, and Pro78 each carry the 4-hydroxyproline modification. A 5-hydroxylysine mark is found at Lys79 and Lys82. 2 O-linked (Gal...) hydroxylysine glycosylation sites follow: Lys79 and Lys82. The 96-residue stretch at 143-238 (ALCSELRGTV…SHTAVCEFPA (96 aa)) folds into the C-type lectin domain. Disulfide bonds link Cys145-Cys234 and Cys212-Cys226. 9 residues coordinate Ca(2+): Asp178, Glu182, Glu202, Asn204, Asp205, Glu210, Asp211, Asn222, and Asp223. A calcium-dependent carbohydrate binding region spans residues 202–210 (EPNDHGSGE).

Homotrimer. Forms higher oligomeric complexes formed by the association of two, three or more homotrimers. Oligomerization occurs in the endoplasmic reticulum. Interacts with MASP1 and MASP2. Post-translationally, hydroxylated on lysine and proline residues within the collagen-like domain. O-glycosylated. O-linked glycans on hydroxylysine residues consist of Glc-Gal disaccharides bound to the oxygen atom of post-translationally added hydroxyl groups. In terms of tissue distribution, detected in blood serum (at protein level).

Its subcellular location is the secreted. In terms of biological role, calcium-dependent lectin. Plays a role in the innate immune response by binding mannose, fucose and N-acetylglucosamine moieties on different microorganisms and mediating activation of the lectin complement pathway. Binds to late apoptotic cells, as well as to apoptotic blebs and to necrotic cells, but not to early apoptotic cells, facilitating their uptake by macrophages. This Rattus norvegicus (Rat) protein is Mannose-binding protein A (Mbl1).